The following is a 259-amino-acid chain: Peroxisomal membrane protein 11B (259 aa).

An N6-acetyllysine modification is found at Lys-43. Residues 211–259 (VVRNACDLFIPLDKLGLWRCGPGIVGLCGLVSSILSILTLIYPWLRLKP) form an interaction with PEX19, PEX11G and FIS1 and peroxisome targeting region. The helical transmembrane segment at 234–254 (IVGLCGLVSSILSILTLIYPW) threads the bilayer.

It belongs to the peroxin-11 family. As to quaternary structure, homodimer. Heterodimer with PEX11G. Interacts with PEX19. Interacts with FIS1.

It localises to the peroxisome membrane. Its function is as follows. Involved in peroxisomal proliferation. May regulate peroxisome division by recruiting the dynamin-related GTPase DNM1L to the peroxisomal membrane. Promotes membrane protrusion and elongation on the peroxisomal surface. In Pongo abelii (Sumatran orangutan), this protein is Peroxisomal membrane protein 11B (PEX11B).